The sequence spans 242 residues: Transcriptional activator protein RaiR (242 aa).

An HTH luxR-type domain is found at 177-242 (KVADLPRLSR…EQLLGPRRSN (66 aa)). The H-T-H motif DNA-binding region spans 201 to 220 (AKQICARLSISVSAVQLYLA).

It belongs to the autoinducer-regulated transcriptional regulatory protein family.

The polypeptide is Transcriptional activator protein RaiR (raiR) (Rhizobium etli).